Here is a 567-residue protein sequence, read N- to C-terminus: Probable diguanylate cyclase DgcQ (567 aa).

2 helical membrane passes run 20–40 (FGPG…STLL) and 357–377 (IALT…WGVI). Residues 425–560 (QPFSVIQLDL…GRNRICASDA (136 aa)) enclose the GGDEF domain. Asp433 lines the Mg(2+) pocket. Substrate is bound by residues Asn441, His446, and Asp450. Mg(2+) is bound at residue Glu476. Catalysis depends on Glu476, which acts as the Proton acceptor.

Homodimer. Mg(2+) is required as a cofactor.

Its subcellular location is the cell inner membrane. The enzyme catalyses 2 GTP = 3',3'-c-di-GMP + 2 diphosphate. It functions in the pathway glycan metabolism; bacterial cellulose biosynthesis. The protein operates within purine metabolism; 3',5'-cyclic di-GMP biosynthesis. Catalyzes the synthesis of cyclic-di-GMP (c-di-GMP) via the condensation of 2 GTP molecules. Cyclic-di-GMP is a second messenger which controls cell surface-associated traits in bacteria. Involved in the regulation of cellulose production. The polypeptide is Probable diguanylate cyclase DgcQ (Salmonella typhi).